A 274-amino-acid chain; its full sequence is Centromere protein K (274 aa).

The segment at 1-21 (MSGYQHELPPNISKTSPAPEE) is disordered. The stretch at 96–159 (KEELEKIAQE…NQLTAFSEKR (64 aa)) forms a coiled coil.

The protein belongs to the CENP-K/MCM22 family.

The protein resides in the nucleus. It is found in the chromosome. It localises to the centromere. The protein localises to the kinetochore. Its function is as follows. Probable component of a centromeric complex involved in assembly of kinetochore proteins, mitotic progression and chromosome segregation. This is Centromere protein K (cenpk) from Xenopus laevis (African clawed frog).